The chain runs to 333 residues: MNKQDVTIYDVAREAKVSMATVSRVVNGNNNVRKETRDRVMEVIKRLHYQPNAVAQGLASKRTTTVGLIVPDLTNLYFAELSKGIDDIAVLYKYNIIISSVENRLMKEDAVIQGLLNKQVDGVIYMSNKLSEEAAEAFKRTDTPVVLAGTVSDNLEFPSVNIDYKKADTEALNLLLNDGKKKLALIVGDKEASINRNYRIPAFEKFVADNELEGCEIFDNIKDYSDGYNLYPELAKKGINGAIITKDVSSVGLLNSALDRGAKVPEDFEIITASATQIASVVRPALTTIKQPLYDLGAVAMRMLTKLMNDESLEDKHIILPYELIKKQSTLNK.

The HTH lacI-type domain maps to 6–60; that stretch reads VTIYDVAREAKVSMATVSRVVNGNNNVRKETRDRVMEVIKRLHYQPNAVAQGLAS. A DNA-binding region (H-T-H motif) is located at residues 8–27; it reads IYDVAREAKVSMATVSRVVN.

In terms of biological role, transcriptional regulator of the pepQ gene for prolidase. The sequence is that of HTH-type transcriptional regulator pepR1 (pepR1) from Lactobacillus delbrueckii subsp. lactis.